Here is a 266-residue protein sequence, read N- to C-terminus: Blue copper protein (266 aa).

The N-terminal stretch at 1-24 is a signal peptide; sequence MAYSKILFCFMIGFVGFLPAITMA. Phytocyanin domains lie at 25–56, 57–102, and 116–216; these read TQYL…GDTL, APPP…TVED, and TEYW…TVEG. A glycan (N-linked (GlcNAc...) asparagine) is linked at Asn47. His156 provides a ligand contact to Cu cation. Residue Asn162 is glycosylated (N-linked (GlcNAc...) asparagine). Cys169 and Cys203 are disulfide-bonded. Positions 197, 202, and 208 each coordinate Cu cation. The chain crosses the membrane as a helical span at residues 245–265; sequence ITSPYKMFVGGAVSIWTILTL.

The protein localises to the membrane. The protein is Blue copper protein of Petunia hybrida (Petunia).